The sequence spans 303 residues: Coenzyme PQQ synthesis protein B (303 aa).

Belongs to the PqqB family.

The protein operates within cofactor biosynthesis; pyrroloquinoline quinone biosynthesis. Functionally, may be involved in the transport of PQQ or its precursor to the periplasm. The polypeptide is Coenzyme PQQ synthesis protein B (Pseudomonas savastanoi pv. phaseolicola (strain 1448A / Race 6) (Pseudomonas syringae pv. phaseolicola (strain 1448A / Race 6))).